We begin with the raw amino-acid sequence, 65 residues long: Large ribosomal subunit protein uL29 (65 aa).

This sequence belongs to the universal ribosomal protein uL29 family.

This chain is Large ribosomal subunit protein uL29, found in Buchnera aphidicola subsp. Schizaphis graminum (strain Sg).